Reading from the N-terminus, the 430-residue chain is Gamma-glutamyl phosphate reductase (430 aa).

This sequence belongs to the gamma-glutamyl phosphate reductase family.

The protein localises to the cytoplasm. The catalysed reaction is L-glutamate 5-semialdehyde + phosphate + NADP(+) = L-glutamyl 5-phosphate + NADPH + H(+). It functions in the pathway amino-acid biosynthesis; L-proline biosynthesis; L-glutamate 5-semialdehyde from L-glutamate: step 2/2. Its function is as follows. Catalyzes the NADPH-dependent reduction of L-glutamate 5-phosphate into L-glutamate 5-semialdehyde and phosphate. The product spontaneously undergoes cyclization to form 1-pyrroline-5-carboxylate. The sequence is that of Gamma-glutamyl phosphate reductase from Rhodopseudomonas palustris (strain ATCC BAA-98 / CGA009).